The following is a 242-amino-acid chain: MILLGVNIDHVATLRQARGTRYPSPVEAALVAESSGADLITLHLREDRRHIQDADVKAMRPVLKTRMNLEMAMTPEMLAHALQVAPEDVCLVPEKREEVTTEGGLDVRGHYADVKHYTGKLTEAGIRVSIFIDPDREQIQKAFDAGARVIELHTGAYADAPHASEREAELARIREAAEFGASLGMVVNAGHGLNYHNVKPIAAIPQIAELNIGHAIVAHALFVGFPQAVREMKALMESARAR.

Residue Asn-7 coordinates 3-amino-2-oxopropyl phosphate. 9 to 10 (DH) contributes to the 1-deoxy-D-xylulose 5-phosphate binding site. A 3-amino-2-oxopropyl phosphate-binding site is contributed by Arg-18. The active-site Proton acceptor is the His-43. Positions 45 and 50 each coordinate 1-deoxy-D-xylulose 5-phosphate. The active-site Proton acceptor is the Glu-70. Position 100 (Thr-100) interacts with 1-deoxy-D-xylulose 5-phosphate. Residue His-191 is the Proton donor of the active site. 3-amino-2-oxopropyl phosphate contacts are provided by residues Gly-192 and 213 to 214 (GH).

The protein belongs to the PNP synthase family. In terms of assembly, homooctamer; tetramer of dimers.

It is found in the cytoplasm. It catalyses the reaction 3-amino-2-oxopropyl phosphate + 1-deoxy-D-xylulose 5-phosphate = pyridoxine 5'-phosphate + phosphate + 2 H2O + H(+). It functions in the pathway cofactor biosynthesis; pyridoxine 5'-phosphate biosynthesis; pyridoxine 5'-phosphate from D-erythrose 4-phosphate: step 5/5. Its function is as follows. Catalyzes the complicated ring closure reaction between the two acyclic compounds 1-deoxy-D-xylulose-5-phosphate (DXP) and 3-amino-2-oxopropyl phosphate (1-amino-acetone-3-phosphate or AAP) to form pyridoxine 5'-phosphate (PNP) and inorganic phosphate. The sequence is that of Pyridoxine 5'-phosphate synthase from Chromobacterium violaceum (strain ATCC 12472 / DSM 30191 / JCM 1249 / CCUG 213 / NBRC 12614 / NCIMB 9131 / NCTC 9757 / MK).